A 167-amino-acid chain; its full sequence is Small ribosomal subunit protein uS5 (167 aa).

Residues 12–75 (LEDNVVAINR…EAARKNLIEV (64 aa)) form the S5 DRBM domain.

This sequence belongs to the universal ribosomal protein uS5 family. In terms of assembly, part of the 30S ribosomal subunit. Contacts proteins S4 and S8.

In terms of biological role, with S4 and S12 plays an important role in translational accuracy. Functionally, located at the back of the 30S subunit body where it stabilizes the conformation of the head with respect to the body. The chain is Small ribosomal subunit protein uS5 from Levilactobacillus brevis (strain ATCC 367 / BCRC 12310 / CIP 105137 / JCM 1170 / LMG 11437 / NCIMB 947 / NCTC 947) (Lactobacillus brevis).